Consider the following 428-residue polypeptide: GTPase Obg (428 aa).

Residues 1–158 (MFVDQVKVYV…RDVILELKVL (158 aa)) enclose the Obg domain. Residues 118–145 (KGGRGGRGNSRFATPANPAPQLSENGEP) form a disordered region. Residues 159–329 (ADVGLVGFPS…LLFEIANQLE (171 aa)) enclose the OBG-type G domain. GTP is bound by residues 165–172 (GFPSVGKS), 190–194 (FTTLV), 212–215 (DLPG), 282–285 (NKMD), and 310–312 (SAI). 2 residues coordinate Mg(2+): serine 172 and threonine 192. The OCT domain occupies 350-428 (RFDEGDAPFE…LLEFEFEFID (79 aa)).

The protein belongs to the TRAFAC class OBG-HflX-like GTPase superfamily. OBG GTPase family. Monomer. Mg(2+) is required as a cofactor.

It localises to the cytoplasm. Its function is as follows. An essential GTPase which binds GTP, GDP and possibly (p)ppGpp with moderate affinity, with high nucleotide exchange rates and a fairly low GTP hydrolysis rate. Plays a role in control of the cell cycle, stress response, ribosome biogenesis and in those bacteria that undergo differentiation, in morphogenesis control. This is GTPase Obg from Bacillus pumilus (strain SAFR-032).